Consider the following 880-residue polypeptide: MQPGATTCTEDRIQHALERCLHGLSLSRRSTSWSAGLCLNCWSLQELVSRDPGHFLILLEQILQKTREVQEKGTYDLLTPLALLFYSTVLCTPHFPPDSDLLLKAASTYHRFLTWPVPYCSICQELLTFIDAELKAPGISYQRLVRAEQGLPIRSHRSSTVTVLLLNPVEVQAEFLAVANKLSTPGHSPHSAYTTLLLHAFQATFGAHCDVPGLHCRLQAKTLAELEDIFTETAEAQELASGIGDAAEARRWLRTKLQAVGEKAGFPGVLDTAKPGKLHTIPIPVARCYTYSWSQDSFDILQEILLKEQELLQPGILGDDEEEEEEEEEVEEDLETDGHCAERDSLLSTSSLASHDSTLSLASSQASGPALSRHLLTSFVSGLSDGMDSGYVEDSEESSSEWPWRRGSQERRGHRRPGQKFIRIYKLFKSTSQLVLRRDSRSLEGSSDTALPLRRAGSLCSPLDEPVSPPSRAQRSRSLPQPKLGTQLPSWLLAPASRPQRRRPFLSGDEDPKASTLRVVVFGSDRISGKVARAYSNLRRLENNRPLLTRFFKLQFFYVPVKRSHGTSPGACPPPRSQTPSPPTDSPRHASPGELGTTPWEESTNDISHYLGMLDPWYERNVLGLMHLPPEVLCQQSLKAEAQALEGSPTQLPILADMLLYYCRFAARPVLLQVYQTELTFITGEKTTEIFIHSLELGHSAATRAIKASGPGSKRLGIDGDREAVPLTLQIIYSKGAISGRSRWSNLEKVCTSVNLNKACRKQEELDSSMEALTLNLTEVVKRQNSKSKKGFNQISTSQIKVDKVQIIGSNSCPFAVCLDQDERKILQSVVRCEVSPCYKPEKSDLSSPPQTPPDLPAQAAPDLCSLLCLPIMTFSGALP.

The residue at position 1 (methionine 1) is an N-acetylmethionine. The tract at residues 25–101 (SLSRRSTSWS…TPHFPPDSDL (77 aa)) is heterodimerization. Disordered regions lie at residues 315–339 (GILG…TDGH), 389–416 (SGYV…GHRR), 454–510 (RRAG…SGDE), and 565–601 (HGTS…TPWE). The segment covering 318-335 (GDDEEEEEEEEEVEEDLE) has biased composition (acidic residues). Residues serine 458 and serine 507 each carry the phosphoserine modification. Residues 571 to 585 (ACPPPRSQTPSPPTD) are compositionally biased toward pro residues. Residues 653 to 753 (PILADMLLYY…WSNLEKVCTS (101 aa)) form an interaction with beta-gamma G protein dimers region.

As to quaternary structure, heterodimer of a catalytic subunit (PIK3CG/p120) and a regulatory (PIK3R5a/p101) subunit. Interacts with beta-gamma G protein dimers. In terms of tissue distribution, ubiquitously expressed with high expression in fetal brain compared to adult brain. Abundant expression is observed in cerebellum, cerebral cortex, cerebral meninges, and vermis cerebelli.

It localises to the nucleus. It is found in the cytoplasm. Its subcellular location is the cell membrane. Greatly activated by G gamma proteins. Functionally, regulatory subunit of the PI3K gamma complex. Required for recruitment of the catalytic subunit to the plasma membrane via interaction with beta-gamma G protein dimers. Required for G protein-mediated activation of PIK3CG. The sequence is that of Phosphoinositide 3-kinase regulatory subunit 5 (PIK3R5) from Homo sapiens (Human).